The sequence spans 157 residues: MKTPLITREGYETLKQELNYLWREERPEVTKKVTWAASLGDRSENADYQYNKKRLREIDRRVRYLTKCMENLKIVDYSPQQEGKVFFGAWVEIENDDGDRLKFRIVGYDEIFGRKDYISIDSPMARALLKKEVGDLAVVNTPVGEANWYVNAIEYVK.

This sequence belongs to the GreA/GreB family. GreB subfamily.

Necessary for efficient RNA polymerase transcription elongation past template-encoded arresting sites. The arresting sites in DNA have the property of trapping a certain fraction of elongating RNA polymerases that pass through, resulting in locked ternary complexes. Cleavage of the nascent transcript by cleavage factors such as GreA or GreB allows the resumption of elongation from the new 3'terminus. GreB releases sequences of up to 9 nucleotides in length. The sequence is that of Transcription elongation factor GreB from Salmonella typhimurium (strain LT2 / SGSC1412 / ATCC 700720).